A 193-amino-acid polypeptide reads, in one-letter code: Dephospho-CoA kinase (193 aa).

In terms of domain architecture, DPCK spans 5–193 (IIGLTGGIAS…KKVERFCETI (189 aa)). ATP is bound at residue 13-18 (ASGKST).

It belongs to the CoaE family.

The protein resides in the cytoplasm. It catalyses the reaction 3'-dephospho-CoA + ATP = ADP + CoA + H(+). It participates in cofactor biosynthesis; coenzyme A biosynthesis; CoA from (R)-pantothenate: step 5/5. Catalyzes the phosphorylation of the 3'-hydroxyl group of dephosphocoenzyme A to form coenzyme A. This chain is Dephospho-CoA kinase, found in Fusobacterium nucleatum subsp. nucleatum (strain ATCC 25586 / DSM 15643 / BCRC 10681 / CIP 101130 / JCM 8532 / KCTC 2640 / LMG 13131 / VPI 4355).